The following is a 217-amino-acid chain: GTP cyclohydrolase 1 (217 aa).

Zn(2+)-binding residues include cysteine 109, histidine 112, and cysteine 180.

Belongs to the GTP cyclohydrolase I family. As to quaternary structure, toroid-shaped homodecamer, composed of two pentamers of five dimers.

The catalysed reaction is GTP + H2O = 7,8-dihydroneopterin 3'-triphosphate + formate + H(+). It participates in cofactor biosynthesis; 7,8-dihydroneopterin triphosphate biosynthesis; 7,8-dihydroneopterin triphosphate from GTP: step 1/1. The protein is GTP cyclohydrolase 1 of Vibrio parahaemolyticus serotype O3:K6 (strain RIMD 2210633).